The sequence spans 67 residues: MPKKLKIKLVKSPIGYPWDQKDTVKRLGLRRMNQVVIKDDCPQIRGMIRKVRHLVEVEEVEEGGNEA.

This sequence belongs to the universal ribosomal protein uL30 family. As to quaternary structure, part of the 50S ribosomal subunit.

The protein is Large ribosomal subunit protein uL30 of Thermotoga neapolitana (strain ATCC 49049 / DSM 4359 / NBRC 107923 / NS-E).